Here is a 364-residue protein sequence, read N- to C-terminus: Ribosomal RNA large subunit methyltransferase F (364 aa).

The segment covering Met-1–Ala-17 has biased composition (low complexity). The tract at residues Met-1–Leu-53 is disordered. Over residues Thr-39–Leu-53 the composition is skewed to basic residues.

Belongs to the methyltransferase superfamily. METTL16/RlmF family.

The protein localises to the cytoplasm. The catalysed reaction is adenosine(1618) in 23S rRNA + S-adenosyl-L-methionine = N(6)-methyladenosine(1618) in 23S rRNA + S-adenosyl-L-homocysteine + H(+). Functionally, specifically methylates the adenine in position 1618 of 23S rRNA. In Shewanella sp. (strain MR-4), this protein is Ribosomal RNA large subunit methyltransferase F.